The chain runs to 331 residues: ESX-3 secretion system protein EccE3 (331 aa).

Transmembrane regions (helical) follow at residues 11 to 31 and 37 to 57; these read GRVT…PWQS and LLGV…GLYF.

This sequence belongs to the EccE family. In terms of assembly, part of the ESX-3 / type VII secretion system (T7SS), which is composed of cytosolic and membrane components. The ESX-3 membrane complex is composed of EccB3, EccC3, EccD3 and EccE3.

It is found in the cell inner membrane. In terms of biological role, part of the ESX-3 specialized secretion system, which is important for iron and zinc uptake or homeostasis. The protein is ESX-3 secretion system protein EccE3 of Mycobacterium tuberculosis (strain ATCC 25618 / H37Rv).